The chain runs to 155 residues: Pathogenesis-related protein STH-21 (155 aa).

Belongs to the BetVI family.

The protein is Pathogenesis-related protein STH-21 (STH-21) of Solanum tuberosum (Potato).